A 590-amino-acid chain; its full sequence is Histone-binding protein N1/N2 (590 aa).

A disordered region spans residues 1–30 (MAEETAALSTEKTEDTSTAPSTSAEKADGI). The stretch at 36–69 (AKRLMGAGQKHLVMKDVRSAVNLFQEASSLLAKQ) is one TPR 1 repeat. Residues 102–328 (ALEGMPEDDE…EKETEEEDVG (227 aa)) are disordered. Acidic residues predominate over residues 106-120 (MPEDDEEEAEKEEDP). Composition is skewed to basic and acidic residues over residues 128-250 (LDEK…DAKE) and 262-275 (AEEKMDSEASESKE). Acidic residues predominate over residues 293–327 (EKMEEEEEGEDSEENEDGTEENEGTEEKETEEEDV). TPR repeat units follow at residues 357 to 390 (AQAHQKLGEVCIESENYSQAVEDFLACLNIQKEH) and 399 to 432 (AETHYHLGLAYQYSSKHEEAISHFTQSIGVIEKR). The tract at residues 492 to 590 (GGSSGFSKEN…METATVESTA (99 aa)) is disordered. Over residues 496–525 (GFSKENGSTSSSSAVEKSGDSTVPVTNCVS) the composition is skewed to polar residues. The Nuclear localization signal signature appears at 531–537 (VRKKRKT). Residues 536–553 (KTEEESPLKDKDAKKSKQ) show a composition bias toward basic and acidic residues.

This sequence belongs to the NASP family.

Its subcellular location is the nucleus. Its function is as follows. This protein is involved in nucleosome assembly. It is bound to H3 and H4 in the absence of DNA, but released from H3 and H4 in the presence of DNA. In Xenopus laevis (African clawed frog), this protein is Histone-binding protein N1/N2.